The following is a 198-amino-acid chain: uncharacterized protein (198 aa).

In terms of domain architecture, PA14 spans 1 to 110 (MTGYFLPPQT…GTTVSDDFEG (110 aa)).

It belongs to the flocculin family.

This is an uncharacterized protein from Saccharomyces cerevisiae (strain ATCC 204508 / S288c) (Baker's yeast).